The following is a 441-amino-acid chain: GTPase Der (441 aa).

EngA-type G domains are found at residues 4–169 (SIVA…PPEA) and 178–353 (PRIA…QNRN). Residues 10–17 (GRPNVGKS), 57–61 (DTGGI), 120–123 (NKVD), 184–191 (GKPNVGKS), 231–235 (DTAGL), and 296–299 (NKWD) each bind GTP. In terms of domain architecture, KH-like spans 354-438 (LRISTGVLNE…SLKFFIRERK (85 aa)).

It belongs to the TRAFAC class TrmE-Era-EngA-EngB-Septin-like GTPase superfamily. EngA (Der) GTPase family. In terms of assembly, associates with the 50S ribosomal subunit.

GTPase that plays an essential role in the late steps of ribosome biogenesis. The sequence is that of GTPase Der from Lachnoclostridium phytofermentans (strain ATCC 700394 / DSM 18823 / ISDg) (Clostridium phytofermentans).